A 773-amino-acid polypeptide reads, in one-letter code: ATP-dependent zinc metalloprotease YME1L1 (773 aa).

At 1-295 (MFSLSSTVQP…TNDSLRRTRL (295 aa)) the chain is on the mitochondrial matrix side. Residues 296-316 (ILFVLLLFGIYGLLKNPFLSV) traverse the membrane as a helical segment. Residues 317–773 (RFRTTTGLDS…VLEGKKLEVR (457 aa)) are Mitochondrial intermembrane-facing. ATP-binding residues include Val341, Thr383, Gly384, Lys385, Thr386, and Leu387. His599 lines the Zn(2+) pocket. Glu600 is an active-site residue. Positions 603 and 677 each coordinate Zn(2+).

This sequence in the N-terminal section; belongs to the AAA ATPase family. In the C-terminal section; belongs to the peptidase M41 family. Homohexamer; may also form heterohexamers. Exists in several complexes of 600-1100 kDa. Interacts with AFG1L. Zn(2+) serves as cofactor. Proteolytically processed by mitochondrial processing peptidase (MPP) to generate the mature form. Degraded in an OMA1-dependent manner in response to oxidative stress. High expression in cardiac and skeletal muscle mitochondria.

The protein resides in the mitochondrion inner membrane. It localises to the mitochondrion. The catalysed reaction is ATP + H2O = ADP + phosphate + H(+). Its function is as follows. ATP-dependent metalloprotease that catalyzes the degradation of folded and unfolded proteins with a suitable degron sequence in the mitochondrial intermembrane region. Plays an important role in regulating mitochondrial morphology and function by cleaving OPA1 at position S2, giving rise to a form of OPA1 that promotes maintenance of normal mitochondrial structure and mitochondrial protein metabolism. Ensures cell proliferation, maintains normal cristae morphology and complex I respiration activity, promotes antiapoptotic activity and protects mitochondria from the accumulation of oxidatively damaged membrane proteins. Required to control the accumulation of nonassembled respiratory chain subunits (NDUFB6, OX4 and ND1). Involved in the mitochondrial adaptation in response to various signals, such as stress or developmental cues, by mediating degradation of mitochondrial proteins to rewire the mitochondrial proteome. Catalyzes degradation of mitochondrial proteins, such as translocases, lipid transfer proteins and metabolic enzymes in response to nutrient starvation in order to limit mitochondrial biogenesis: mechanistically, YME1L is activated by decreased phosphatidylethanolamine levels caused by LPIN1 activity in response to mTORC1 inhibition. Acts as a regulator of adult neural stem cell self-renewal by promoting mitochondrial proteome rewiring, preserving neural stem and progenitor cells self-renewal. Required for normal, constitutive degradation of PRELID1. Catalyzes the degradation of OMA1 in response to membrane depolarization. Mediates degradation of TIMM17A downstream of the integrated stress response (ISR). Catalyzes degradation of MICU1 when MICU1 is not assembled via an interchain disulfide. The sequence is that of ATP-dependent zinc metalloprotease YME1L1 (YME1L1) from Homo sapiens (Human).